We begin with the raw amino-acid sequence, 304 residues long: tRNA dimethylallyltransferase (304 aa).

16 to 23 (GPTASGKS) serves as a coordination point for ATP. 18-23 (TASGKS) is a substrate binding site. Interaction with substrate tRNA regions lie at residues 41–44 (DSMQ) and 165–169 (QRIIR).

It belongs to the IPP transferase family. In terms of assembly, monomer. Requires Mg(2+) as cofactor.

It catalyses the reaction adenosine(37) in tRNA + dimethylallyl diphosphate = N(6)-dimethylallyladenosine(37) in tRNA + diphosphate. Its function is as follows. Catalyzes the transfer of a dimethylallyl group onto the adenine at position 37 in tRNAs that read codons beginning with uridine, leading to the formation of N6-(dimethylallyl)adenosine (i(6)A). The sequence is that of tRNA dimethylallyltransferase from Allorhizobium ampelinum (strain ATCC BAA-846 / DSM 112012 / S4) (Agrobacterium vitis (strain S4)).